A 525-amino-acid chain; its full sequence is Cytochrome P450 4V2 (525 aa).

The helical transmembrane segment at 13–33 threads the bilayer; the sequence is LLLWGAASAVSLAGASLVLSL. Residues glutamate 329 and cysteine 467 each coordinate heme.

Belongs to the cytochrome P450 family. The cofactor is heme.

It is found in the endoplasmic reticulum membrane. The enzyme catalyses dodecanoate + reduced [NADPH--hemoprotein reductase] + O2 = 12-hydroxydodecanoate + oxidized [NADPH--hemoprotein reductase] + H2O + H(+). It catalyses the reaction tetradecanoate + reduced [NADPH--hemoprotein reductase] + O2 = 14-hydroxytetradecanoate + oxidized [NADPH--hemoprotein reductase] + H2O + H(+). The catalysed reaction is hexadecanoate + reduced [NADPH--hemoprotein reductase] + O2 = 16-hydroxyhexadecanoate + oxidized [NADPH--hemoprotein reductase] + H2O + H(+). It carries out the reaction (5Z,8Z,11Z,14Z,17Z)-eicosapentaenoate + reduced [NADPH--hemoprotein reductase] + O2 = 20-hydroxy-(5Z,8Z,11Z,14Z,17Z)-eicosapentaenoate + oxidized [NADPH--hemoprotein reductase] + H2O + H(+). The enzyme catalyses (4Z,7Z,10Z,13Z,16Z,19Z)-docosahexaenoate + reduced [NADPH--hemoprotein reductase] + O2 = 22-hydroxy-(4Z,7Z,10Z,13Z,16Z,19Z)-docosahexaenoate + oxidized [NADPH--hemoprotein reductase] + H2O + H(+). Its pathway is lipid metabolism; fatty acid metabolism. Its activity is regulated as follows. Inhibited by N-hydroxy-N'-(4-n-butyl-2-methylphenyl formamidine)(HET0016) with an IC(50) of 38 nM. Its function is as follows. A cytochrome P450 monooxygenase involved in fatty acid metabolism in the eye. Catalyzes the omega-hydroxylation of polyunsaturated fatty acids (PUFAs) docosahexaenoate (DHA) and its precursor eicosapentaenoate (EPA), and may contribute to the homeostasis of these retinal PUFAs. Omega hydroxylates saturated fatty acids such as laurate, myristate and palmitate, the catalytic efficiency decreasing in the following order: myristate &gt; laurate &gt; palmitate (C14&gt;C12&gt;C16). Mechanistically, uses molecular oxygen inserting one oxygen atom into a substrate, and reducing the second into a water molecule, with two electrons provided by NADPH via cytochrome P450 reductase (CPR; NADPH-ferrihemoprotein reductase). This Pongo abelii (Sumatran orangutan) protein is Cytochrome P450 4V2 (CYP4V2).